A 246-amino-acid chain; its full sequence is DNA polymerase sliding clamp (246 aa).

Belongs to the PCNA family. In terms of assembly, homotrimer. The subunits circularize to form a toroid; DNA passes through its center. Replication factor C (RFC) is required to load the toroid on the DNA.

Functionally, sliding clamp subunit that acts as a moving platform for DNA processing. Responsible for tethering the catalytic subunit of DNA polymerase and other proteins to DNA during high-speed replication. The sequence is that of DNA polymerase sliding clamp from Thermoplasma volcanium (strain ATCC 51530 / DSM 4299 / JCM 9571 / NBRC 15438 / GSS1).